Here is a 284-residue protein sequence, read N- to C-terminus: Trimeric intracellular cation channel type B-B (284 aa).

At 1–15 (MESLSEVSVQFSQLS) the chain is on the lumenal side. The helical transmembrane segment at 16 to 32 (MFPFFDMAHYLASVMSA) threads the bilayer. At 33-44 (REQAGALDIASH) the chain is on the cytoplasmic side. A helical transmembrane segment spans residues 45 to 68 (SPMASWFSAMLHCFGGGILSSILL). Topologically, residues 69 to 79 (AEPPVGILANT) are lumenal. A helical membrane pass occupies residues 80-99 (TNIMLASAIWYMVYYFPYDL). Residues 100-102 (FYN) lie on the Cytoplasmic side of the membrane. A helical membrane pass occupies residues 103–121 (CFFFLPIRLIAAGMKEVTR). Positions 117 and 121 each coordinate a 1,2-diacyl-sn-glycero-3-phospho-(1D-myo-inositol-4,5-bisphosphate). Residues 122-139 (TWKILSGITHAHSHYKDA) lie on the Lumenal side of the membrane. A helical membrane pass occupies residues 140–157 (WLVMITIGWARGAGGGLI). Over 158–178 (SNFEQLVRGVWKPESNEFLKM) the chain is Cytoplasmic. A helical transmembrane segment spans residues 179 to 196 (SYPVKVTLIGAVLFTLQH). Residues 197-204 (GHYLPISR) are Lumenal-facing. A helical membrane pass occupies residues 205 to 225 (HNLMFIYTMFLVSIKVTMMLT). Residues 226–284 (HSAGSPFLPLETPLHRILFGLRQNQAEVRESPSSSGAKGKPSKKTLDKDSGEQSNKKDK) lie on the Cytoplasmic side of the membrane. The interval 250–284 (QAEVRESPSSSGAKGKPSKKTLDKDSGEQSNKKDK) is disordered. The segment covering 269-284 (KTLDKDSGEQSNKKDK) has biased composition (basic and acidic residues).

Belongs to the TMEM38 family. Homotrimer; conformation seems to be controled by binding to diacylglycerol (DAG).

It localises to the endoplasmic reticulum membrane. The enzyme catalyses K(+)(in) = K(+)(out). Its activity is regulated as follows. Channel activity is activated by increased cytosolic Ca(2+) levels and blocked by luminal high Ca(2+) levels. Its function is as follows. Intracellular monovalent cation channel required for maintenance of rapid intracellular calcium release. Acts as a potassium counter-ion channel that functions in synchronization with calcium release from intracellular stores. Activated by increased cytosolic Ca(2+) levels. The sequence is that of Trimeric intracellular cation channel type B-B (tmem38b-b) from Xenopus laevis (African clawed frog).